The sequence spans 452 residues: Glycylpeptide N-tetradecanoyltransferase (452 aa).

Tetradecanoyl-CoA contacts are provided by residues 38-41 (YKFW), 171-173 (LCI), and 179-183 (SKRLA). Leucine 452 serves as the catalytic Proton acceptor; via carboxylate.

The protein belongs to the NMT family. As to quaternary structure, monomer.

It is found in the cytoplasm. It carries out the reaction N-terminal glycyl-[protein] + tetradecanoyl-CoA = N-tetradecanoylglycyl-[protein] + CoA + H(+). Adds a myristoyl group to the N-terminal glycine residue of certain cellular proteins. The protein is Glycylpeptide N-tetradecanoyltransferase (NMT1) of Eremothecium gossypii (strain ATCC 10895 / CBS 109.51 / FGSC 9923 / NRRL Y-1056) (Yeast).